The chain runs to 573 residues: Proline--tRNA ligase (573 aa).

It belongs to the class-II aminoacyl-tRNA synthetase family. ProS type 1 subfamily. In terms of assembly, homodimer.

It is found in the cytoplasm. The enzyme catalyses tRNA(Pro) + L-proline + ATP = L-prolyl-tRNA(Pro) + AMP + diphosphate. Functionally, catalyzes the attachment of proline to tRNA(Pro) in a two-step reaction: proline is first activated by ATP to form Pro-AMP and then transferred to the acceptor end of tRNA(Pro). As ProRS can inadvertently accommodate and process non-cognate amino acids such as alanine and cysteine, to avoid such errors it has two additional distinct editing activities against alanine. One activity is designated as 'pretransfer' editing and involves the tRNA(Pro)-independent hydrolysis of activated Ala-AMP. The other activity is designated 'posttransfer' editing and involves deacylation of mischarged Ala-tRNA(Pro). The misacylated Cys-tRNA(Pro) is not edited by ProRS. This chain is Proline--tRNA ligase, found in Methylobacillus flagellatus (strain ATCC 51484 / DSM 6875 / VKM B-1610 / KT).